A 492-amino-acid polypeptide reads, in one-letter code: Endoglycoceramidase I (492 aa).

A signal peptide spans 1-14 (MRKTVVAFAAAIAA). Residue cysteine 15 is the site of N-palmitoyl cysteine attachment. Cysteine 15 carries S-diacylglycerol cysteine lipidation. Substrate contacts are provided by residues lysine 61, aspartate 62, 131-133 (HQD), and 213-214 (NE). Glutamate 214 acts as the Proton donor in catalysis. A disulfide bridge connects residues cysteine 224 and cysteine 229. 3 residues coordinate substrate: asparagine 265, glutamine 298, and tyrosine 302. An intrachain disulfide couples cysteine 294 to cysteine 313. The Nucleophile role is filled by glutamate 339. Tryptophan 365 lines the substrate pocket. A disordered region spans residues 467 to 492 (NRPGSAGAEVPDGPIETSSSGSSGSS).

Belongs to the glycosyl hydrolase 5 (cellulase A) family.

It is found in the secreted. The protein resides in the membrane. It catalyses the reaction an oligoglycosyl-(1-&gt;4)-beta-D-glucosyl-(1&lt;-&gt;1)-ceramide + H2O = an oligoglycosyl-(1-&gt;4)-D-glucose + an N-acyl-sphingoid base. The catalysed reaction is a ganglioside GM3 + H2O = N-acetyl-alpha-neuraminosyl-(2-&gt;3)-beta-D-galactosyl-(1-&gt;4)-D-glucose + an N-acyl-sphingoid base. The enzyme catalyses a ganglioside GM1 + H2O = beta-D-Gal-(1-&gt;3)-beta-D-GalNAc-(1-&gt;4)-[alpha-Neu5Ac-(2-&gt;3)]-beta-D-Gal-(1-&gt;4)-D-Glc + an N-acyl-sphingoid base. It carries out the reaction a ganglioside Fuc-GM1 + H2O = alpha-Fuc-(1-&gt;2)-beta-Gal-(1-&gt;3)-beta-GalNAc-(1-&gt;4)-[alpha-Neu5Ac-(2-&gt;3)]-beta-Gal-(1-&gt;4)-Glc + an N-acyl-sphingoid base. It catalyses the reaction a beta-D-galactosyl-(1-&gt;4)-beta-D-glucosyl-(1&lt;-&gt;1)-ceramide + H2O = lactose + an N-acyl-sphingoid base. Functionally, hydrolyzes glycosphingolipids; exhibits broad substrate specificity including monosialodihexosylganglioside (GM3), monosialotetrahexosylganglioside (GM1), fucosyl-GM1, lactosylceramide, globotriosylceramide, globotetraosylceramide, ganglioside GD1a, and ganglioside GD1b. No activity towards glucosylceramide and galactosylceramide. In Rhodococcus hoagii (strain 103S) (Rhodococcus equi), this protein is Endoglycoceramidase I.